Consider the following 395-residue polypeptide: Neuromedin-U receptor 2 (395 aa).

Residues 1–41 (MGKLENASWIHDPLMKYLNSTEEYLAHLCGPKRSDLSLPVS) are Extracellular-facing. Residues asparagine 6 and asparagine 19 are each glycosylated (N-linked (GlcNAc...) asparagine). Residues 42–62 (VAYALIFLVGVMGNLLVCMVI) form a helical membrane-spanning segment. Over 63–74 (VRHQTLKTPTNY) the chain is Cytoplasmic. The helical transmembrane segment at 75–95 (YLFSLAVSDLLVLLLGMPLEI) threads the bilayer. The Extracellular portion of the chain corresponds to 96–115 (YEMWHNYPFLFGPVGCYFKT). Residues cysteine 111 and cysteine 196 are joined by a disulfide bond. Residues 116–138 (ALFETVCFASILSVTTVSVERYV) traverse the membrane as a helical segment. Topologically, residues 139-157 (AIVHPFRAKLESTRRRALR) are cytoplasmic. The chain crosses the membrane as a helical span at residues 158–178 (ILSLVWSFSVVFSLPNTSIHG). Over 179-212 (IKFQHFPNGSSVPGSATCTVTKPMWVYNLIIQAT) the chain is Extracellular. Asparagine 186 is a glycosylation site (N-linked (GlcNAc...) asparagine). Residues 213 to 233 (SFLFYILPMTLISVLYYLMGL) form a helical membrane-spanning segment. Residues 234–257 (RLKRDESLEANKVAVNIHRPSRKS) are Cytoplasmic-facing. The chain crosses the membrane as a helical span at residues 258–278 (VTKMLFVLVLVFAICWTPFHV). Residues 279 to 293 (DRLFFSFVEEWTESL) are Extracellular-facing. The chain crosses the membrane as a helical span at residues 294–314 (AAVFNLIHVVSGVFFYLSSAV). The Cytoplasmic portion of the chain corresponds to 315–395 (NPIIYNLLSR…TTAPCAGEVP (81 aa)). The disordered stretch occupies residues 374–395 (FPGQSSIHNTNLTTAPCAGEVP). Residues 375–387 (PGQSSIHNTNLTT) are compositionally biased toward polar residues.

Belongs to the G-protein coupled receptor 1 family. In terms of tissue distribution, the highest level is detected in the uterus. In the central nervous system, high expression levels were found in the hypothalamus and moderate levels in both the medulla oblongata and spinal cord. Expressed in the hypothalamic paraventricular nucleus (PVN) and suprachiasmatic nuclei (SCN) of the hypothalamus. Expression is low in the gastrointestinal tract. In other peripheral tissues, moderate expression was observed in the lung and ovary.

It localises to the cell membrane. Functionally, receptor for the neuromedin-U and neuromedin-S neuropeptides. The chain is Neuromedin-U receptor 2 (Nmur2) from Rattus norvegicus (Rat).